The sequence spans 749 residues: MTTITTSNLGFPRLGRKREWKKAIESYWAKKIDKAELDQKISDLHRENLLLQKHYNLDSVPVGDFSLYDHILDTSLLFNIIPERFQGREVNDDLLFDIARGNKEHVASALIKWFNTNYHYIVPEWDNVEPKVNHNVLLDRFNYAKSLNVNAHPVIVGPITFVKLSKGGHQSFEEKVQTLLPLYKEVLQALVDAGAEYIQVDEPVLVTDESEAYEAITREAYDYFDKAGLADKLVIQTYFERANVKFLSSLPVGGLGLDFVHDNGYNLKQIESGDFDSSKTLYAGIIDGRNVWAADIEAKKKLIETLQGHAKHIVIQPSSSLLHVPVSLDDETLEQSIEEGLSFATEKLDELDALRRLFNQNDSAKYDKLKARYERFQSQSFKNLEYDFDSVPTSRKSPFPERKKAQDARLHLPDLPTTTIGSFPQTQEVRKYRADWKNKRISDEAYNNFLESEIARWIKIQEDIGLDVLVHGEFERNDMVEFFGEKLQGFLVTKFGWVQSYGSRAVKPPVIYGDVKWTEPLTVKETVYAQSLTDKPVKGMLTGPVTILNWSFERVDVPRKVVQDQIALAIDEEVLALEEAGIKVIQVDEPALREGLPLRSEYHEQYLADAVNSFKLATSSVQDETQIHTHMCYSQFGQIIHAIHELDADVISIETSRSHGDLIKDFEDINYDLGIGLGVYDIHSPRIPTEDEIATAIDRSLQQIDRSLFWVNPDCGLKTRKEDEVKDALTVLVNTVRKKRASNNQNKPA.

Residues 18–21 (REWK) and lysine 112 each bind 5-methyltetrahydropteroyltri-L-glutamate. L-homocysteine-binding positions include 420 to 422 (IGS) and glutamate 473. Residues 420–422 (IGS) and glutamate 473 contribute to the L-methionine site. Tryptophan 550 lines the 5-methyltetrahydropteroyltri-L-glutamate pocket. Aspartate 588 is a binding site for L-homocysteine. Aspartate 588 is an L-methionine binding site. Residue glutamate 594 coordinates 5-methyltetrahydropteroyltri-L-glutamate. Zn(2+) is bound by residues histidine 630, cysteine 632, and glutamate 654. Histidine 683 acts as the Proton donor in catalysis. Cysteine 715 contacts Zn(2+).

It belongs to the vitamin-B12 independent methionine synthase family. Zn(2+) serves as cofactor.

It catalyses the reaction 5-methyltetrahydropteroyltri-L-glutamate + L-homocysteine = tetrahydropteroyltri-L-glutamate + L-methionine. The protein operates within amino-acid biosynthesis; L-methionine biosynthesis via de novo pathway; L-methionine from L-homocysteine (MetE route): step 1/1. Functionally, catalyzes the transfer of a methyl group from 5-methyltetrahydrofolate to homocysteine resulting in methionine formation. The polypeptide is 5-methyltetrahydropteroyltriglutamate--homocysteine methyltransferase (Staphylococcus haemolyticus (strain JCSC1435)).